The primary structure comprises 259 residues: MENVYISSYSSNEQISMAVVTTDIRELLSQYVDDANLENLIEWAMEKSSKYYIKNIGNTKSNIEETKFESKNNIGIEYSKDSKNKLSYRNKPSIATHLEYKTLCDMIKGTSGTEKEFLRYLLFGIKCIKKGVEYNIDKIKDVSYNDYFNVLDEKYNTPCPNCKSRNTTPMMIQTRAADEPPLVRHACRDCKQHFKPPKFRAFRNLNVTTQSIHENKEITEILPDNNPSPPESPEPASPIDDGLIRATFDRNDEPPEDDE.

A TFIIS-type zinc finger spans residues 155–195 (YNTPCPNCKSRNTTPMMIQTRAADEPPLVRHACRDCKQHFK). Residues C159, C162, C187, and C190 each coordinate Zn(2+). A disordered region spans residues 220 to 259 (EILPDNNPSPPESPEPASPIDDGLIRATFDRNDEPPEDDE). Residues 226–236 (NPSPPESPEPA) show a composition bias toward pro residues.

It belongs to the poxviridae DNA-directed RNA polymerase 30 kDa subunit family. The DNA-dependent RNA polymerase (vRNAP) consists of eight subunits encoded by early viral genes and termed according to their apparent molecular masses Rpo147, Rpo132, Rpo35, Rpo30, Rpo22, Rpo19, Rpo18, and Rpo7. The same holoenzyme, with the addition of the transcription-specificity factor RAP94, is used for early gene expression.

It is found in the virion. The protein resides in the host cytoplasm. The catalysed reaction is RNA(n) + a ribonucleoside 5'-triphosphate = RNA(n+1) + diphosphate. In terms of biological role, part of the DNA-dependent RNA polymerase which catalyzes the transcription of viral DNA into RNA using the four ribonucleoside triphosphates as substrates. Responsible for the transcription of early, intermediate and late genes. DNA-dependent RNA polymerase associates with the early transcription factor (ETF), itself composed of OPG118 and OPG134, thereby allowing the early genes transcription. Late transcription, and probably also intermediate transcription, require newly synthesized RNA polymerase. The chain is DNA-directed RNA polymerase 30 kDa polypeptide (OPG066) from Monkeypox virus.